A 99-amino-acid chain; its full sequence is Large ribosomal subunit protein bL28 (99 aa).

This sequence belongs to the bacterial ribosomal protein bL28 family.

The chain is Large ribosomal subunit protein bL28 from Rhizobium etli (strain CIAT 652).